Here is a 305-residue protein sequence, read N- to C-terminus: Acetylglutamate kinase (305 aa).

Residues 80–81, Arg102, and Asn196 each bind substrate; that span reads GG.

Belongs to the acetylglutamate kinase family. ArgB subfamily.

The protein localises to the cytoplasm. It catalyses the reaction N-acetyl-L-glutamate + ATP = N-acetyl-L-glutamyl 5-phosphate + ADP. It participates in amino-acid biosynthesis; L-arginine biosynthesis; N(2)-acetyl-L-ornithine from L-glutamate: step 2/4. Functionally, catalyzes the ATP-dependent phosphorylation of N-acetyl-L-glutamate. The chain is Acetylglutamate kinase from Chlorobium luteolum (strain DSM 273 / BCRC 81028 / 2530) (Pelodictyon luteolum).